The chain runs to 356 residues: Thiamine thiazole synthase, chloroplastic (356 aa).

A chloroplast-targeting transit peptide spans 1–51 (MAAMASTAFAPSVSSTTNKLFDSSFHGAPMSPSLLRLQPIKSSRPNNLSIS). Substrate contacts are provided by residues alanine 101, 121-122 (EQ), glycine 129, and alanine 194. Position 223 is a 2,3-didehydroalanine (Cys) (cysteine 223). Substrate is bound by residues aspartate 225, histidine 240, methionine 292, and 302 to 304 (RMG).

It belongs to the THI4 family. In terms of assembly, homooctamer. Fe cation is required as a cofactor. Post-translationally, during the catalytic reaction, a sulfide is transferred from Cys-223 to a reaction intermediate, generating a dehydroalanine residue.

The protein localises to the plastid. Its subcellular location is the chloroplast. It catalyses the reaction [ADP-thiazole synthase]-L-cysteine + glycine + NAD(+) = [ADP-thiazole synthase]-dehydroalanine + ADP-5-ethyl-4-methylthiazole-2-carboxylate + nicotinamide + 3 H2O + 2 H(+). Its function is as follows. Involved in biosynthesis of the thiamine precursor thiazole. Catalyzes the conversion of NAD and glycine to adenosine diphosphate 5-(2-hydroxyethyl)-4-methylthiazole-2-carboxylic acid (ADT), an adenylated thiazole intermediate. The reaction includes an iron-dependent sulfide transfer from a conserved cysteine residue of the protein to a thiazole intermediate. The enzyme can only undergo a single turnover, which suggests it is a suicide enzyme. May have additional roles in adaptation to various stress conditions and in DNA damage tolerance. The protein is Thiamine thiazole synthase, chloroplastic of Citrus sinensis (Sweet orange).